Reading from the N-terminus, the 448-residue chain is N-succinylarginine dihydrolase (448 aa).

Residues 19-28 (AGLSSGNIAS), Asn-110, and 137-138 (HR) each bind substrate. Glu-174 is an active-site residue. Arg-216 is a binding site for substrate. His-252 is an active-site residue. Positions 254 and 366 each coordinate substrate. The active-site Nucleophile is Cys-372.

The protein belongs to the succinylarginine dihydrolase family. Homodimer.

The enzyme catalyses N(2)-succinyl-L-arginine + 2 H2O + 2 H(+) = N(2)-succinyl-L-ornithine + 2 NH4(+) + CO2. The protein operates within amino-acid degradation; L-arginine degradation via AST pathway; L-glutamate and succinate from L-arginine: step 2/5. Functionally, catalyzes the hydrolysis of N(2)-succinylarginine into N(2)-succinylornithine, ammonia and CO(2). The chain is N-succinylarginine dihydrolase from Legionella pneumophila (strain Paris).